Reading from the N-terminus, the 502-residue chain is MRQSIKGRALRHFTLSTGKSAGRNSSGRITVFHRGGGSKRLQRKIDLKRSTSSIGIVERIEYDPNRSSRIALVRWIEGVLPGRQRKFKTIEEFALPRKILESTTATIFCLFSFSSLSSPLAQGETASLSFGSSLGFPRIAVAGAKPAFFAERMREKKIGKKTFSLCEIRKWRTHCVLWAHRIKRKAALSWQSLRQQKTLELVGAAEHNESKLKADQGSLLPRQVLAYALCSGRPSYLHASRSFYKALLPVEASRFGSLPAKPPIGEGPKDGAYKVDRAPVTYILASHQLEAGNMVINCDCSKPSKSGFLRPAQNAHTYLRFQELGRTVNKGRVEGGSQLAASWPRPPAYRHEILDLNSKVGNSIPLADIRMGTWVHDIECHPGQGAKLARAAGTYAKIIKEPASQCLVRLPSGVEKLIDSRCRATIGIVSNPNHGARKLRKAGQSRWSGRRPIVRGVAMNPVDHPHGGGEGRTKGGRPSVSPWGKPTKAGFRAGVGVGKRRI.

Residues 458–502 are disordered; it reads AMNPVDHPHGGGEGRTKGGRPSVSPWGKPTKAGFRAGVGVGKRRI. The segment covering 463-473 has biased composition (basic and acidic residues); that stretch reads DHPHGGGEGRT. Residues 493 to 502 show a composition bias toward gly residues; it reads AGVGVGKRRI.

Belongs to the universal ribosomal protein uL2 family.

It localises to the mitochondrion. The protein is Large ribosomal subunit protein uL2m (RPL2) of Oryza sativa (Rice).